A 205-amino-acid polypeptide reads, in one-letter code: Guanylate kinase (205 aa).

Residues 3–183 (GFVLLISGPS…SYEALRAILI (181 aa)) enclose the Guanylate kinase-like domain. Position 10-17 (10-17 (GPSGAGKS)) interacts with ATP.

The protein belongs to the guanylate kinase family.

Its subcellular location is the cytoplasm. It catalyses the reaction GMP + ATP = GDP + ADP. Its function is as follows. Essential for recycling GMP and indirectly, cGMP. This Campylobacter jejuni (strain RM1221) protein is Guanylate kinase.